A 92-amino-acid polypeptide reads, in one-letter code: Small ribosomal subunit protein uS19c (92 aa).

It belongs to the universal ribosomal protein uS19 family.

The protein resides in the plastid. The protein localises to the chloroplast. Its function is as follows. Protein S19 forms a complex with S13 that binds strongly to the 16S ribosomal RNA. The sequence is that of Small ribosomal subunit protein uS19c from Manihot esculenta (Cassava).